A 177-amino-acid chain; its full sequence is Transcription termination/antitermination protein NusG (177 aa).

The KOW domain occupies 125 to 150 (EGENVRITEGPFANFTAIVEEYDMVR).

It belongs to the NusG family.

Participates in transcription elongation, termination and antitermination. This is Transcription termination/antitermination protein NusG from Campylobacter jejuni subsp. jejuni serotype O:2 (strain ATCC 700819 / NCTC 11168).